A 279-amino-acid polypeptide reads, in one-letter code: Diaminopimelate epimerase (279 aa).

Substrate is bound by residues N11 and N63. C72 serves as the catalytic Proton donor. Residues 73 to 74 (GN), N161, N194, and 212 to 213 (ER) each bind substrate. C221 acts as the Proton acceptor in catalysis. 222–223 (GT) contacts substrate.

The protein belongs to the diaminopimelate epimerase family. Homodimer.

The protein resides in the cytoplasm. It carries out the reaction (2S,6S)-2,6-diaminopimelate = meso-2,6-diaminopimelate. Its pathway is amino-acid biosynthesis; L-lysine biosynthesis via DAP pathway; DL-2,6-diaminopimelate from LL-2,6-diaminopimelate: step 1/1. Catalyzes the stereoinversion of LL-2,6-diaminopimelate (L,L-DAP) to meso-diaminopimelate (meso-DAP), a precursor of L-lysine and an essential component of the bacterial peptidoglycan. This Moorella thermoacetica (strain ATCC 39073 / JCM 9320) protein is Diaminopimelate epimerase.